A 188-amino-acid chain; its full sequence is Ion-translocating oxidoreductase complex subunit B (188 aa).

Positions 1–26 are hydrophobic; sequence MMSLWIAIGALSTLALVSGVVLGFAA. The 4Fe-4S domain maps to 32-91; it reads DEDPVVEQVDAILPQSQCGQCGYPGCRPYAEAVSTGGEKINKCAPGGEQVMLKLAELLAV. [4Fe-4S] cluster-binding residues include Cys49, Cys52, Cys57, Cys74, Cys117, Cys120, Cys123, Cys127, Cys147, Cys150, Cys153, and Cys157. 2 consecutive 4Fe-4S ferredoxin-type domains span residues 108–137 and 138–167; these read KVAF…GATR and AMHT…MIPV.

It belongs to the 4Fe4S bacterial-type ferredoxin family. RnfB subfamily. The complex is composed of six subunits: RnfA, RnfB, RnfC, RnfD, RnfE and RnfG. Requires [4Fe-4S] cluster as cofactor.

Its subcellular location is the cell inner membrane. In terms of biological role, part of a membrane-bound complex that couples electron transfer with translocation of ions across the membrane. In Yersinia pestis bv. Antiqua (strain Antiqua), this protein is Ion-translocating oxidoreductase complex subunit B.